The following is a 105-amino-acid chain: Small ribosomal subunit protein uS17 (105 aa).

This sequence belongs to the universal ribosomal protein uS17 family. Part of the 30S ribosomal subunit.

Its function is as follows. One of the primary rRNA binding proteins, it binds specifically to the 5'-end of 16S ribosomal RNA. The polypeptide is Small ribosomal subunit protein uS17 (Thermus thermophilus (strain ATCC BAA-163 / DSM 7039 / HB27)).